The following is a 402-amino-acid chain: Adenylyltransferase and sulfurtransferase MOCS3 (402 aa).

ATP is bound by residues G47, D68, 75–79, K92, and 136–137; these read DNLHR and DN. Zn(2+) contacts are provided by C178 and C181. C195 functions as the Glycyl thioester intermediate; for adenylyltransferase activity in the catalytic mechanism. The Zn(2+) site is built by C253 and C256. The Rhodanese domain maps to 303 to 400; sequence AARKQFLLDT…WALKINDEFP (98 aa). The active-site Cysteine persulfide intermediate; for sulfurtransferase activity is the C359.

It in the N-terminal section; belongs to the HesA/MoeB/ThiF family. UBA4 subfamily. Requires Zn(2+) as cofactor.

It localises to the cytoplasm. The protein localises to the cytosol. The enzyme catalyses [molybdopterin-synthase sulfur-carrier protein]-C-terminal Gly-Gly + ATP + H(+) = [molybdopterin-synthase sulfur-carrier protein]-C-terminal Gly-Gly-AMP + diphosphate. The catalysed reaction is [molybdopterin-synthase sulfur-carrier protein]-C-terminal Gly-Gly-AMP + S-sulfanyl-L-cysteinyl-[cysteine desulfurase] + AH2 = [molybdopterin-synthase sulfur-carrier protein]-C-terminal-Gly-aminoethanethioate + L-cysteinyl-[cysteine desulfurase] + A + AMP + 2 H(+). It participates in tRNA modification; 5-methoxycarbonylmethyl-2-thiouridine-tRNA biosynthesis. The protein operates within cofactor biosynthesis; molybdopterin biosynthesis. Its function is as follows. Plays a central role in 2-thiolation of mcm(5)S(2)U at tRNA wobble positions of cytosolic tRNA(Lys), tRNA(Glu) and tRNA(Gln). Also essential during biosynthesis of the molybdenum cofactor. Acts by mediating the C-terminal thiocarboxylation of sulfur carriers URM1 and MOCS2A. Its N-terminus first activates URM1 and MOCS2A as acyl-adenylates (-COAMP), then the persulfide sulfur on the catalytic cysteine is transferred to URM1 and MOCS2A to form thiocarboxylation (-COSH) of their C-terminus. The reaction probably involves hydrogen sulfide that is generated from the persulfide intermediate and that acts as a nucleophile towards URM1 and MOCS2A. Subsequently, a transient disulfide bond is formed. Does not use thiosulfate as sulfur donor; NFS1 probably acting as a sulfur donor for thiocarboxylation reactions. The polypeptide is Adenylyltransferase and sulfurtransferase MOCS3 (Caenorhabditis briggsae).